We begin with the raw amino-acid sequence, 729 residues long: MVHHDGADAHAGHAAPAQPPMKSDTATPKLNSEVELGSLPSEAHNDIMQMARVGDITGMEKLFAAGEYDATYSDDEGITPLHWAAINNQYAMCKFLIDKGAEINKKGGESVATPLQWAAQRCHYYTVHLLLQHGADPLITDSQGYNTLHISTFNGNVLLIVLLLHQGIPVDVEDAYGHTALMWSAYKGFPACVDVFLRWGASVHAKDEQGFTALHWALVKGSPGCIQKLIEYGADRFAKTANGKTPAITAQELNTVAAWQKALDECGYDEHGNAIVPSWPGASYLLQDRRSFMTKFTFLWPFVMVWATMVVMAGMPVFVGIPLGVLAGYAVQWVAQQVIAYAPPDMRQLQKTPWMAGIFAGSLFLCIMNWLLHIFGSTMFGQDSAVIPNLLFAFFISMTIWFYIRCMVDDPGFVPKMGGVAEQKAVIDELISLWKFDESNFCVTCMIRTPLRSKHCRRCQRCVAKHDHHCPWVYNCIGVNNHRHFFFYLINLTLSVVTYDWLTYRYLSTLSETASDECNILAPSLCRIVNADTYSLLTAIWASLQLTWVSMLLFVQFVQVSSAMTTYENMHGIDNYSATSLNSSFTSTGAPLNPPSLPAPGPSPAAGGARHGGRHAHGHNHKQGFIKQWSRLLGVDAFIETAAGRGATTGKGSKRNKRGNPYSRGCVTNCKDFWCDPSPMFGKHENGAAVLGGVPVNYTDMYESPGVMTSGGGGRRRGGGYESVAGEEV.

Over residues 1 to 11 (MVHHDGADAHA) the composition is skewed to basic and acidic residues. The interval 1 to 28 (MVHHDGADAHAGHAAPAQPPMKSDTATP) is disordered. Residues 1–297 (MVHHDGADAH…DRRSFMTKFT (297 aa)) are Cytoplasmic-facing. ANK repeat units follow at residues 76–105 (EGIT…EINK), 110–139 (SVAT…DPLI), 143–172 (QGYN…PVDV), 176–205 (YGHT…SVHA), and 209–238 (QGFT…DRFA). The next 2 helical transmembrane spans lie at 298 to 318 (FLWP…MPVF) and 319 to 339 (VGIP…QQVI). At 340–354 (AYAPPDMRQLQKTPW) the chain is on the cytoplasmic side. A helical membrane pass occupies residues 355-375 (MAGIFAGSLFLCIMNWLLHIF). Over 376 to 383 (GSTMFGQD) the chain is Lumenal. A helical membrane pass occupies residues 384–404 (SAVIPNLLFAFFISMTIWFYI). Over 405 to 483 (RCMVDDPGFV…YNCIGVNNHR (79 aa)) the chain is Cytoplasmic. Residues 440–490 (NFCVTCMIRTPLRSKHCRRCQRCVAKHDHHCPWVYNCIGVNNHRHFFFYLI) form the DHHC domain. The active-site S-palmitoyl cysteine intermediate is the Cys470. The helical transmembrane segment at 484–504 (HFFFYLINLTLSVVTYDWLTY) threads the bilayer. The Lumenal portion of the chain corresponds to 505–534 (RYLSTLSETASDECNILAPSLCRIVNADTY). The helical transmembrane segment at 535–555 (SLLTAIWASLQLTWVSMLLFV) threads the bilayer. The Cytoplasmic portion of the chain corresponds to 556–729 (QFVQVSSAMT…GYESVAGEEV (174 aa)). Disordered stretches follow at residues 587 to 620 (STGA…HGHN) and 709 to 729 (TSGG…GEEV). Residues 592-603 (LNPPSLPAPGPS) show a composition bias toward pro residues. Residues 611-620 (HGGRHAHGHN) show a composition bias toward basic residues.

The protein belongs to the DHHC palmitoyltransferase family. AKR/ZDHHC17 subfamily.

Its subcellular location is the early endosome membrane. The protein resides in the golgi apparatus membrane. The enzyme catalyses L-cysteinyl-[protein] + hexadecanoyl-CoA = S-hexadecanoyl-L-cysteinyl-[protein] + CoA. Its function is as follows. Palmitoyltransferase specific for casein kinase 1. This Neurospora crassa (strain ATCC 24698 / 74-OR23-1A / CBS 708.71 / DSM 1257 / FGSC 987) protein is Palmitoyltransferase akr1 (ptr-1).